The primary structure comprises 484 residues: ATP synthase subunit beta (484 aa).

Glycine 162 to threonine 169 contacts ATP.

The protein belongs to the ATPase alpha/beta chains family. As to quaternary structure, F-type ATPases have 2 components, CF(1) - the catalytic core - and CF(0) - the membrane proton channel. CF(1) has five subunits: alpha(3), beta(3), gamma(1), delta(1), epsilon(1). CF(0) has four main subunits: a(1), b(1), b'(1) and c(9-12).

The protein resides in the cellular thylakoid membrane. It catalyses the reaction ATP + H2O + 4 H(+)(in) = ADP + phosphate + 5 H(+)(out). Functionally, produces ATP from ADP in the presence of a proton gradient across the membrane. The catalytic sites are hosted primarily by the beta subunits. This chain is ATP synthase subunit beta, found in Synechococcus elongatus (strain ATCC 33912 / PCC 7942 / FACHB-805) (Anacystis nidulans R2).